Consider the following 184-residue polypeptide: Luciferin-binding protein (184 aa).

4 EF-hand domains span residues 10–45, 46–81, 98–133, and 134–169; these read YHLRKMKTRMKRVDVTGDGFISREDYELIAVRIAKI, AKLSAEKAEETRQEFLRVADQLGLAPGVRISVEEAA, MAVIQSLIMYDCIDTDKDGYVSLPEFKAFLQAVGPD, and ITDDKAITCFNTLDFNKNGQISRDEFLVTVNDFLFG. 10 residues coordinate Ca(2+): D111, D113, D115, Y117, E122, D147, N149, N151, Q153, and E158.

This Ca(2+)-dependent protein binds to luciferin. The luciferin of LBP is capable of reacting with luciferase and O(2) only when calcium is bound. In Renilla reniformis (Sea pansy), this protein is Luciferin-binding protein.